A 93-amino-acid chain; its full sequence is Cell division protein CrgA (93 aa).

2 consecutive transmembrane segments (helical) span residues 31–51 (VWFV…LMVF) and 70–90 (LGPW…LLTM).

Belongs to the CrgA family.

Its subcellular location is the cell membrane. Its function is as follows. Involved in cell division. This chain is Cell division protein CrgA, found in Mycobacterium marinum (strain ATCC BAA-535 / M).